Reading from the N-terminus, the 734-residue chain is Transcriptional regulator AacuB (734 aa).

Positions 26 to 52 (CVLCQQRKIKCDRTFPCTNCVRAHVQC) form a DNA-binding region, zn(2)-C6 fungal-type. Basic and acidic residues predominate over residues 86-107 (FDPLHTPTADHRSASDDGRDDL). The disordered stretch occupies residues 86-122 (FDPLHTPTADHRSASDDGRDDLPEGAESEGTFGEREK).

The protein localises to the nucleus. Functionally, transcriptional regulator; part of the gene cluster that mediates the biosynthesis of the tetrahydroxanthone dimer secalonic acid D. The polypeptide is Transcriptional regulator AacuB (Aspergillus aculeatus (strain ATCC 16872 / CBS 172.66 / WB 5094)).